The primary structure comprises 285 residues: TATA box-binding protein-associated factor RNA polymerase I subunit D (285 aa).

Disordered stretches follow at residues 1–49 (MAQS…RIPT) and 85–112 (KKKR…TRNI). The segment covering 21-39 (GNQSDDSSNSSLFKTQCVP) has biased composition (polar residues). A Phosphoserine modification is found at S24. Basic residues predominate over residues 85 to 104 (KKKRKKRKKRKYKPKLRRQG). S134 is modified (phosphoserine). The disordered stretch occupies residues 193-219 (HKYMDDDGPLSPIEEPSTEDEATDPQS). Phosphoserine is present on S229. 2 stretches are compositionally biased toward basic and acidic residues: residues 242–264 (NLEQ…KDAT) and 273–285 (KGGE…SEVS). Residues 242 to 285 (NLEQGKIKKESAFSKKSKAKDATQRGNRRSWKGGEHACLHSEVS) are disordered.

Component of the transcription factor SL1/TIF-IB complex, composed of TBP and at least TAF1A, TAF1B, TAF1C and TAF1D. Interacts with UBTF.

Its subcellular location is the nucleus. In terms of biological role, component of the transcription factor SL1/TIF-IB complex, which is involved in the assembly of the PIC (preinitiation complex) during RNA polymerase I-dependent transcription. The rate of PIC formation probably is primarily dependent on the rate of association of SL1/TIF-IB with the rDNA promoter. SL1/TIF-IB is involved in stabilization of nucleolar transcription factor 1/UBTF on rDNA. Formation of SL1/TIF-IB excludes the association of TBP with TFIID subunits. The protein is TATA box-binding protein-associated factor RNA polymerase I subunit D (Taf1d) of Rattus norvegicus (Rat).